The sequence spans 86 residues: uncharacterized protein (86 aa).

As to expression, retina-specific.

This is an uncharacterized protein from Homo sapiens (Human).